A 1422-amino-acid chain; its full sequence is MQGNKKCADGFSDTSSIGSVLDEADREVSNLTDRAFRSLCISEDTSFHDSDLALSPEITSQVSGTFHQETVSHANRKSGIWSQLPSQGTEHSGWAATFQQQPKYVQGEEKYPKNSPLPTPVQRRLEVPISGLRSSSKPISKVSSLIRSFDRTEAQPCDSRPPPSKPPALKNTPKFAHPPESGVNFCFDSAFLTVRRVPAGVSSTHQSSHQPCRAPGEPEPPTNPEIACHSSDSLLRAPDRVAGSCEPRFPSPSLKPPKAETGRGKEWISRGTFLHSENSAFESWDAHQPKLRERKDITETTPESKAPKHYEDMPLLKEPYPAESKLSPCQGRANCAQEENRSPSGIQSTSGAWGARDSGSQVFPVEGNASQIDPQVKRNQAPWRKPKTGKGGTDGPHDASEDKKQPNRKGLPLYSKLNPQGQLPENGVLDLPEESSDHYSSPFNISKLLTPIISTKHVLETSDTQPVETSPSPPGQLNGYQEKESSEAQSRDSYKSKAPSLLFNLKDVRKRVKSTYSPLPLLKGFDEKTRGKLDGKQEPLSNGVTLPNGLEENPPTAELVKETLDDAPSVLHSSTQKDPAMDSRESFADSHPTFSSPSASSKTHFSINGEAAERNSHEKEEANGESEQGLSEGGWHPDSRENLPRKHLSLKLCNRDSETGQATEKMKPRQLEKRLSRSISQETEPEREMGFQNLPVSQKFSPGPLSPEEEDVFYSDSQSDFTPCVQTKAKFSTSSSDQSFASFEDQQKMWFTEGPREDGKSHVSLGDNQKDEKETEVEKEEPQQCALHNGVEEHRQKETQRKAQGVLGGRPRKASAEEVSVRGSWTGADKDTALSHAKDPTPLPASTNKHRLFPIKDNTLRATPVIKPIILPLLRTVSSEDSLSGGHKENELPRQPWGEDAGGLGASESQEMRNTPLSNSTPSTEQKCVVYEGVEEDPVHTAAQDETSQQTRKGSFSFLPLVEEGGKTKPPPDTADERLAHEKSRSADSGKLEAPQHIPTIALHSDDLEDSPPSLPQHTCWEEQGFKSHFLSAPRAGPSGRRPVPSEAATSPNPSSLGGSSTCSPAASSIWEDASQAAGEHWQRQEPPGPGPWASPGPSGPTGLTRREDMTRGLTWEAEGSDPHLERLADFRTLSPRGIFLTGAAEKPEPSSLLEKAAGKPPAVPPKTEKALRRAKKLASKRRKSDQMSEKHTEAWEGKSFTEDAQGTEQRPVSPGKGPRPRFPEVRSLPPPTHRHSVSCGWEPAGRRPWGSQSLIPLPPYPATQKVLQDPQSGQYFVFDMPLQVKIKTFYDPETGKYVKVSVPSSEEDPSEPPLQDALTAPYLLYPGFQPVPVTSLMPLRCSSQLAAPTFLRQGSSHRPQSSQGARLQPPPERLGESAQHVSSAQRPRGPPLSPEEEGAEAPSLSIISTDDLEDFATEGVS.

The disordered stretch occupies residues 1–23; sequence MQGNKKCADGFSDTSSIGSVLDE. Thr-119 is subject to Phosphothreonine. Disordered regions lie at residues 151 to 177, 199 to 265, 279 to 443, 459 to 500, 516 to 718, 731 to 850, 877 to 1127, 1142 to 1244, and 1353 to 1422; these read RTEA…KFAH, AGVS…GRGK, SAFE…SSPF, LETS…KAPS, YSPL…SDSQ, FSTS…TNKH, VSSE…HLER, TGAA…GWEP, and RQGS…EGVS. Polar residues predominate over residues 201–210; that stretch reads VSSTHQSSHQ. Composition is skewed to basic and acidic residues over residues 284-298 and 305-315; these read WDAH…KDIT and KAPKHYEDMPL. Residue Ser-327 is modified to Phosphoserine. A compositionally biased stretch (polar residues) spans 342 to 351; the sequence is SPSGIQSTSG. A compositionally biased stretch (basic and acidic residues) spans 395–405; that stretch reads GPHDASEDKKQ. Over residues 461–470 the composition is skewed to polar residues; that stretch reads TSDTQPVETS. Ser-472 bears the Phosphoserine mark. Basic and acidic residues-rich tracts occupy residues 481 to 495, 524 to 537, and 579 to 588; these read QEKE…DSYK, GFDE…DGKQ, and PAMDSRESFA. Over residues 590–606 the composition is skewed to low complexity; that stretch reads SHPTFSSPSASSKTHFS. Basic and acidic residues-rich tracts occupy residues 611-622, 635-644, and 653-675; these read AAERNSHEKEEA, WHPDSRENLP, and CNRD…EKRL. Residues 731–744 show a composition bias toward low complexity; that stretch reads FSTSSSDQSFASFE. Basic and acidic residues predominate over residues 790–801; it reads GVEEHRQKETQR. Ser-815 is modified (phosphoserine). Positions 828–839 are enriched in basic and acidic residues; sequence ADKDTALSHAKD. Polar residues-rich tracts occupy residues 907–926 and 944–954; these read SESQ…STEQ and QDETSQQTRKG. Residues 975 to 991 are compositionally biased toward basic and acidic residues; sequence ADERLAHEKSRSADSGK. Residues 1048–1067 are compositionally biased toward polar residues; sequence AATSPNPSSLGGSSTCSPAA. Positions 1087–1099 are enriched in pro residues; sequence PPGPGPWASPGPS. Over residues 1173 to 1184 the composition is skewed to basic residues; that stretch reads RRAKKLASKRRK. Residues 1185-1202 are compositionally biased toward basic and acidic residues; it reads SDQMSEKHTEAWEGKSFT. Residues 1353 to 1366 show a composition bias toward polar residues; it reads RQGSSHRPQSSQGA. Acidic residues predominate over residues 1411 to 1422; that stretch reads DDLEDFATEGVS.

As to quaternary structure, interacts with FHL2.

It is found in the cytoplasm. The protein resides in the myofibril. Its subcellular location is the sarcomere. The protein localises to the z line. Plays an important role in cardiomyocyte hypertrophy via activation of the calcineurin/NFAT signaling pathway. The sequence is that of Cardiac-enriched FHL2-interacting protein from Rattus norvegicus (Rat).